Here is a 267-residue protein sequence, read N- to C-terminus: Tryptophan synthase alpha chain (267 aa).

Active-site proton acceptor residues include E49 and D60.

It belongs to the TrpA family. As to quaternary structure, tetramer of two alpha and two beta chains.

It carries out the reaction (1S,2R)-1-C-(indol-3-yl)glycerol 3-phosphate + L-serine = D-glyceraldehyde 3-phosphate + L-tryptophan + H2O. It functions in the pathway amino-acid biosynthesis; L-tryptophan biosynthesis; L-tryptophan from chorismate: step 5/5. Its function is as follows. The alpha subunit is responsible for the aldol cleavage of indoleglycerol phosphate to indole and glyceraldehyde 3-phosphate. The protein is Tryptophan synthase alpha chain of Rippkaea orientalis (strain PCC 8801 / RF-1) (Cyanothece sp. (strain PCC 8801)).